The sequence spans 357 residues: Ferrochelatase (357 aa).

2 residues coordinate Fe cation: histidine 193 and glutamate 272.

The protein belongs to the ferrochelatase family.

The protein localises to the cytoplasm. The catalysed reaction is heme b + 2 H(+) = protoporphyrin IX + Fe(2+). It functions in the pathway porphyrin-containing compound metabolism; protoheme biosynthesis; protoheme from protoporphyrin-IX: step 1/1. Functionally, catalyzes the ferrous insertion into protoporphyrin IX. The polypeptide is Ferrochelatase (Hyphomonas neptunium (strain ATCC 15444)).